The sequence spans 316 residues: Putative HTH-type transcriptional regulatory protein PYRAB03670 (316 aa).

The 59-residue stretch at 131-189 folds into the HTH cro/C1-type domain; that stretch reads LKDLREKHGYSLSELANILGVSRKSLQRYEKGDSMVTLEVALRLEEVFDEALVKPINVL. A DNA-binding region (H-T-H motif) is located at residues 142–161; sequence LSELANILGVSRKSLQRYEK.

The protein is Putative HTH-type transcriptional regulatory protein PYRAB03670 of Pyrococcus abyssi (strain GE5 / Orsay).